Here is a 513-residue protein sequence, read N- to C-terminus: Histidine ammonia-lyase (513 aa).

A cross-link (5-imidazolinone (Ala-Gly)) is located at residues 144-146; that stretch reads ASG. Ser-145 carries the post-translational modification 2,3-didehydroalanine (Ser).

It belongs to the PAL/histidase family. Post-translationally, contains an active site 4-methylidene-imidazol-5-one (MIO), which is formed autocatalytically by cyclization and dehydration of residues Ala-Ser-Gly.

It is found in the cytoplasm. It carries out the reaction L-histidine = trans-urocanate + NH4(+). It functions in the pathway amino-acid degradation; L-histidine degradation into L-glutamate; N-formimidoyl-L-glutamate from L-histidine: step 1/3. The chain is Histidine ammonia-lyase from Streptococcus pyogenes serotype M5 (strain Manfredo).